The sequence spans 150 residues: Small ribosomal subunit protein uS11x (150 aa).

Belongs to the universal ribosomal protein uS11 family.

The protein resides in the cytoplasm. This Arabidopsis thaliana (Mouse-ear cress) protein is Small ribosomal subunit protein uS11x (RPS14C).